Reading from the N-terminus, the 255-residue chain is Pyrroloquinoline-quinone synthase (255 aa).

The protein belongs to the PqqC family.

The enzyme catalyses 6-(2-amino-2-carboxyethyl)-7,8-dioxo-1,2,3,4,7,8-hexahydroquinoline-2,4-dicarboxylate + 3 O2 = pyrroloquinoline quinone + 2 H2O2 + 2 H2O + H(+). The protein operates within cofactor biosynthesis; pyrroloquinoline quinone biosynthesis. Functionally, ring cyclization and eight-electron oxidation of 3a-(2-amino-2-carboxyethyl)-4,5-dioxo-4,5,6,7,8,9-hexahydroquinoline-7,9-dicarboxylic-acid to PQQ. In Cereibacter sphaeroides (strain ATCC 17023 / DSM 158 / JCM 6121 / CCUG 31486 / LMG 2827 / NBRC 12203 / NCIMB 8253 / ATH 2.4.1.) (Rhodobacter sphaeroides), this protein is Pyrroloquinoline-quinone synthase.